A 312-amino-acid polypeptide reads, in one-letter code: Olfactory receptor 1J21 (312 aa).

7 helical membrane passes run 29 to 49, 58 to 78, 95 to 115, 143 to 163, 197 to 217, 241 to 261, and 272 to 292; these read ALFL…ILLI, PMYF…SVTA, AGCV…NFLL, LLVM…TLLF, LVIL…ILVS, CGSH…LYFF, and VIVA…IYSL.

It belongs to the G-protein coupled receptor 1 family.

Its subcellular location is the cell membrane. Its function is as follows. Odorant receptor. Activated by (+) and (-)-carvone. This chain is Olfactory receptor 1J21, found in Mus musculus (Mouse).